Reading from the N-terminus, the 340-residue chain is UDP-N-acetylglucosamine--N-acetylmuramyl-(pentapeptide) pyrophosphoryl-undecaprenol N-acetylglucosamine transferase (340 aa).

UDP-N-acetyl-alpha-D-glucosamine is bound by residues 15 to 17, Asn127, Ser184, Ile230, and Gln275; that span reads TGG.

This sequence belongs to the glycosyltransferase 28 family. MurG subfamily.

Its subcellular location is the cell inner membrane. The catalysed reaction is di-trans,octa-cis-undecaprenyl diphospho-N-acetyl-alpha-D-muramoyl-L-alanyl-D-glutamyl-meso-2,6-diaminopimeloyl-D-alanyl-D-alanine + UDP-N-acetyl-alpha-D-glucosamine = di-trans,octa-cis-undecaprenyl diphospho-[N-acetyl-alpha-D-glucosaminyl-(1-&gt;4)]-N-acetyl-alpha-D-muramoyl-L-alanyl-D-glutamyl-meso-2,6-diaminopimeloyl-D-alanyl-D-alanine + UDP + H(+). It participates in cell wall biogenesis; peptidoglycan biosynthesis. In terms of biological role, cell wall formation. Catalyzes the transfer of a GlcNAc subunit on undecaprenyl-pyrophosphoryl-MurNAc-pentapeptide (lipid intermediate I) to form undecaprenyl-pyrophosphoryl-MurNAc-(pentapeptide)GlcNAc (lipid intermediate II). The sequence is that of UDP-N-acetylglucosamine--N-acetylmuramyl-(pentapeptide) pyrophosphoryl-undecaprenol N-acetylglucosamine transferase from Vesicomyosocius okutanii subsp. Calyptogena okutanii (strain HA).